The sequence spans 248 residues: Putative transposase YncI (248 aa).

Belongs to the transposase 11 family.

The protein is Putative transposase YncI (yncI) of Escherichia coli (strain K12).